A 61-amino-acid polypeptide reads, in one-letter code: Small ribosomal subunit protein uS14 (61 aa).

Residues 1–14 (MAKTSQKVRNHRPA) show a composition bias toward basic residues. Positions 1–20 (MAKTSQKVRNHRPAKFSSRE) are disordered. 4 residues coordinate Zn(2+): cysteine 24, cysteine 27, cysteine 40, and cysteine 43.

This sequence belongs to the universal ribosomal protein uS14 family. Zinc-binding uS14 subfamily. In terms of assembly, part of the 30S ribosomal subunit. Contacts proteins S3 and S10. It depends on Zn(2+) as a cofactor.

In terms of biological role, binds 16S rRNA, required for the assembly of 30S particles and may also be responsible for determining the conformation of the 16S rRNA at the A site. The protein is Small ribosomal subunit protein uS14 of Lactobacillus delbrueckii subsp. bulgaricus (strain ATCC 11842 / DSM 20081 / BCRC 10696 / JCM 1002 / NBRC 13953 / NCIMB 11778 / NCTC 12712 / WDCM 00102 / Lb 14).